A 151-amino-acid polypeptide reads, in one-letter code: MPDLYAYTDGACSGNPGPGGWGVLMLAREGEAVVKERTLQGGEVLTTNNRMELMAAISALEALTRPTEITIVTDSAYVKNGVTTWIHGWKRNGWKTADRKPVKNAELWERLDAAQQRHKVVWRWIKGHAGHAENERADELARAGMAPFKTR.

Positions 1–146 (MPDLYAYTDG…ADELARAGMA (146 aa)) constitute an RNase H type-1 domain. Mg(2+) contacts are provided by D9, E52, D74, and D138.

The protein belongs to the RNase H family. Monomer. It depends on Mg(2+) as a cofactor.

The protein localises to the cytoplasm. It catalyses the reaction Endonucleolytic cleavage to 5'-phosphomonoester.. Functionally, endonuclease that specifically degrades the RNA of RNA-DNA hybrids. The protein is Ribonuclease H of Cereibacter sphaeroides (strain ATCC 17029 / ATH 2.4.9) (Rhodobacter sphaeroides).